The chain runs to 327 residues: Protein CONSERVED IN THE GREEN LINEAGE AND DIATOMS 27, chloroplastic (327 aa).

Residues 1-59 constitute a chloroplast transit peptide; it reads MLRLIVNYPLIPKISHRVCSNSSSKLGSYYDSSSIIKYGGISDVVGKKQELFLSVSVKA. Positions 66–88 are disordered; it reads NGGGSMSFSGQSWDPSSEIEVPS. 3 helical membrane-spanning segments follow: residues 119-139, 148-168, and 225-245; these read LGGLWLVTFTVLGVPVAAASF, FILAAGTGTLFLVSLIVLRIY, and LIGTGALLVSAFVLFVFATPV.

As to expression, mostly expressed in seeds, leaves and flowers, and, to a lower extent, in roots.

The protein resides in the membrane. Its subcellular location is the plastid. It is found in the chloroplast. Functionally, required for growth in low iron conditions. This chain is Protein CONSERVED IN THE GREEN LINEAGE AND DIATOMS 27, chloroplastic, found in Arabidopsis thaliana (Mouse-ear cress).